The chain runs to 321 residues: tRNA-dihydrouridine synthase B (321 aa).

FMN-binding positions include 16 to 18 (PMA) and Gln-70. The active-site Proton donor is the Cys-100. FMN-binding positions include Lys-139, 200-202 (NGD), and 224-225 (GR).

It belongs to the Dus family. DusB subfamily. Requires FMN as cofactor.

It carries out the reaction a 5,6-dihydrouridine in tRNA + NAD(+) = a uridine in tRNA + NADH + H(+). The enzyme catalyses a 5,6-dihydrouridine in tRNA + NADP(+) = a uridine in tRNA + NADPH + H(+). In terms of biological role, catalyzes the synthesis of 5,6-dihydrouridine (D), a modified base found in the D-loop of most tRNAs, via the reduction of the C5-C6 double bond in target uridines. This Yersinia pestis protein is tRNA-dihydrouridine synthase B.